Consider the following 263-residue polypeptide: Acyl-[acyl-carrier-protein]--UDP-N-acetylglucosamine O-acyltransferase (263 aa).

This sequence belongs to the transferase hexapeptide repeat family. LpxA subfamily. In terms of assembly, homotrimer.

Its subcellular location is the cytoplasm. It carries out the reaction a (3R)-hydroxyacyl-[ACP] + UDP-N-acetyl-alpha-D-glucosamine = a UDP-3-O-[(3R)-3-hydroxyacyl]-N-acetyl-alpha-D-glucosamine + holo-[ACP]. The protein operates within glycolipid biosynthesis; lipid IV(A) biosynthesis; lipid IV(A) from (3R)-3-hydroxytetradecanoyl-[acyl-carrier-protein] and UDP-N-acetyl-alpha-D-glucosamine: step 1/6. Functionally, involved in the biosynthesis of lipid A, a phosphorylated glycolipid that anchors the lipopolysaccharide to the outer membrane of the cell. The protein is Acyl-[acyl-carrier-protein]--UDP-N-acetylglucosamine O-acyltransferase of Campylobacter jejuni (strain RM1221).